A 329-amino-acid chain; its full sequence is Pantothenate kinase (329 aa).

Residue 107 to 114 (GSVAVGKS) coordinates ATP.

It belongs to the prokaryotic pantothenate kinase family.

It is found in the cytoplasm. The enzyme catalyses (R)-pantothenate + ATP = (R)-4'-phosphopantothenate + ADP + H(+). The protein operates within cofactor biosynthesis; coenzyme A biosynthesis; CoA from (R)-pantothenate: step 1/5. The sequence is that of Pantothenate kinase from Streptomyces avermitilis (strain ATCC 31267 / DSM 46492 / JCM 5070 / NBRC 14893 / NCIMB 12804 / NRRL 8165 / MA-4680).